Here is a 69-residue protein sequence, read N- to C-terminus: uncharacterized protein (69 aa).

A run of 2 helical transmembrane segments spans residues leucine 7 to isoleucine 29 and alanine 44 to leucine 66.

The protein resides in the cell membrane. This is an uncharacterized protein from Archaeoglobus fulgidus (strain ATCC 49558 / DSM 4304 / JCM 9628 / NBRC 100126 / VC-16).